The primary structure comprises 136 residues: Histone H3 (136 aa).

The segment at 1–43 (MARTKQTARKNVGGKAPRKHIGQKSARKTASTTAGMKKPHRYR) is disordered. Lys10 carries the N6-methylated lysine modification. N6-acetyllysine occurs at positions 15 and 24. The span at 16-27 (APRKHIGQKSAR) shows a compositional bias: basic residues. N6-methylated lysine occurs at positions 28 and 37.

It belongs to the histone H3 family. As to quaternary structure, the nucleosome is a histone octamer containing two molecules each of H2A, H2B, H3 and H4 assembled in one H3-H4 heterotetramer and two H2A-H2B heterodimers. The octamer wraps approximately 147 bp of DNA.

It localises to the nucleus. The protein resides in the chromosome. Its function is as follows. Core component of nucleosome. Nucleosomes wrap and compact DNA into chromatin, limiting DNA accessibility to the cellular machineries which require DNA as a template. Histones thereby play a central role in transcription regulation, DNA repair, DNA replication and chromosomal stability. DNA accessibility is regulated via a complex set of post-translational modifications of histones, also called histone code, and nucleosome remodeling. The sequence is that of Histone H3 from Euplotes crassus.